Consider the following 630-residue polypeptide: GTPase-activating protein NEL1 (630 aa).

The protein belongs to the SEC23/SEC24 family. SEC23 subfamily.

It is found in the cytoplasm. It localises to the nucleus. Acts as a GTPase-activating protein (GAP) for SAR1. Contrary to its SEC23 homolog, NEL1 does not associate with SEC24 and its homologs, nor does it associate with the COPII components, suggesting that it is unlikely that NEL1 functions as a structural component of the vesicle coat machinery. May function as a signaling molecule. This Saccharomyces cerevisiae (strain ATCC 204508 / S288c) (Baker's yeast) protein is GTPase-activating protein NEL1.